The following is a 477-amino-acid chain: Argininosuccinate lyase (477 aa).

This sequence belongs to the lyase 1 family. Argininosuccinate lyase subfamily.

Its subcellular location is the cytoplasm. It carries out the reaction 2-(N(omega)-L-arginino)succinate = fumarate + L-arginine. It functions in the pathway amino-acid biosynthesis; L-arginine biosynthesis; L-arginine from L-ornithine and carbamoyl phosphate: step 3/3. This Streptomyces avermitilis (strain ATCC 31267 / DSM 46492 / JCM 5070 / NBRC 14893 / NCIMB 12804 / NRRL 8165 / MA-4680) protein is Argininosuccinate lyase.